The primary structure comprises 386 residues: Manganese dependent endoglucanase Eg5A (386 aa).

The first 17 residues, 1–17 (MLKYASIALALATLGVA), serve as a signal peptide directing secretion. The CBM1 domain maps to 18-53 (QQQQWGQCGGIGWTGATTCVAGSVCSVLNPYYSQCI). The active-site Proton donor is Glu209. Catalysis depends on Glu319, which acts as the Nucleophile. Asn324 carries N-linked (GlcNAc...) asparagine glycosylation.

It belongs to the glycosyl hydrolase 5 (cellulase A) family. The cofactor is Mn(2+).

The protein localises to the secreted. The enzyme catalyses Endohydrolysis of (1-&gt;4)-beta-D-glucosidic linkages in cellulose, lichenin and cereal beta-D-glucans.. In terms of biological role, secreted manganese dependent endoglucanase that acts by cleaving the beta-1,4-glucose linkage. Exhibits high activity toward carboxymethyl-cellulose (CMC), barley glucan, and glucomannan. Displays low activity on larminarin and xyloglucan but does not hydrolyze hemicellulose substrates such as birchwood xylan, arabinoxylan, and arabinan. In Phanerodontia chrysosporium (White-rot fungus), this protein is Manganese dependent endoglucanase Eg5A.